A 183-amino-acid polypeptide reads, in one-letter code: MTKQPEDWLDDVPGDDIEDEDDEIIWVSKSEIKRDAEELKRLGAEIVDLGKNALYKIPLDADLRPAIELAQRIKMEGRRRQLQLIGKMLRQRDVEPIRQALDKLKNRHNQQVVLFHKLENLRDRLIDQGDDAIAEVLNLWPDADRQQLRTLIRNAKKEKEGNKPPKSARQIFQYLRELAENEG.

The protein belongs to the DarP family.

The protein localises to the cytoplasm. Functionally, member of a network of 50S ribosomal subunit biogenesis factors which assembles along the 30S-50S interface, preventing incorrect 23S rRNA structures from forming. Promotes peptidyl transferase center (PTC) maturation. This chain is Dual-action ribosomal maturation protein DarP, found in Shigella flexneri.